A 498-amino-acid polypeptide reads, in one-letter code: Lysine--tRNA ligase (498 aa).

Mg(2+) contacts are provided by Glu-411 and Glu-418.

It belongs to the class-II aminoacyl-tRNA synthetase family. In terms of assembly, homodimer. Mg(2+) is required as a cofactor.

The protein resides in the cytoplasm. It catalyses the reaction tRNA(Lys) + L-lysine + ATP = L-lysyl-tRNA(Lys) + AMP + diphosphate. The sequence is that of Lysine--tRNA ligase from Enterococcus faecalis (strain ATCC 700802 / V583).